A 399-amino-acid polypeptide reads, in one-letter code: Transferrin receptor subunit ESAG6 (399 aa).

The signal sequence occupies residues 1–17 (MRFWFVLLALLGKEIYA). Asparagine 26 and asparagine 110 each carry an N-linked (GlcNAc...) asparagine glycan. 3 disulfide bridges follow: cysteine 34–cysteine 161, cysteine 84–cysteine 312, and cysteine 144–cysteine 215. Residues asparagine 235, asparagine 250, and asparagine 360 are each glycosylated (N-linked (GlcNAc...) asparagine). Asparagine 376 carries the GPI-anchor amidated asparagine lipid modification. Residues 377–399 (AAAIHLSVSTAALCRSALLLGVL) constitute a propeptide, removed in mature form.

As to quaternary structure, heterodimer composed of ESAG6 and ESAG7. In terms of processing, N-glycosylated. Glycosylation is dispensable for heterodimer formation and host transferrin binding.

It localises to the cell membrane. Its subcellular location is the flagellar pocket. Transferrin receptor subunit involved in receptor-mediated acquisition of iron from the environment by binding host TF/transferrin. The chain is Transferrin receptor subunit ESAG6 from Trypanosoma brucei brucei.